Reading from the N-terminus, the 112-residue chain is Protein new-glue 2 (112 aa).

The N-terminal stretch at 1-24 is a signal peptide; that stretch reads MKITVVLVLLATFLGCVMIHESEA. Low complexity predominate over residues 24 to 69; sequence ASTTTTSTSASATTTTSASATTTTSASATTTTSASATTTTASPSSS. The interval 24–112 is disordered; that stretch reads ASTTTTSTSA…RSSRNRRSEE (89 aa). 4 consecutive repeat copies span residues 31 to 38, 39 to 46, 47 to 54, and 55 to 62. Positions 31-62 are 4 X 8 AA tandem repeats of T-S-A-S-A-T-T-T; sequence TSASATTTTSASATTTTSASATTTTSASATTT. Over residues 70 to 112 the composition is skewed to basic residues; the sequence is SKKKTVTHYKRKVKRPKKVRKITRRRGLRSRNGRSSRNRRSEE.

This sequence to NG-1, also to SGS-3. In terms of tissue distribution, salivary gland specific.

The protein resides in the secreted. The polypeptide is Protein new-glue 2 (ng2) (Drosophila melanogaster (Fruit fly)).